The sequence spans 274 residues: Dermonecrotic toxin LspiSicTox-betaIII2 (274 aa).

The active site involves His-5. Glu-25 and Asp-27 together coordinate Mg(2+). Residue His-41 is the Nucleophile of the active site. Intrachain disulfides connect Cys-45–Cys-51 and Cys-47–Cys-189. Asp-85 serves as a coordination point for Mg(2+).

This sequence belongs to the arthropod phospholipase D family. Class II subfamily. Mg(2+) serves as cofactor. As to expression, expressed by the venom gland.

Its subcellular location is the secreted. It carries out the reaction an N-(acyl)-sphingosylphosphocholine = an N-(acyl)-sphingosyl-1,3-cyclic phosphate + choline. The enzyme catalyses an N-(acyl)-sphingosylphosphoethanolamine = an N-(acyl)-sphingosyl-1,3-cyclic phosphate + ethanolamine. It catalyses the reaction a 1-acyl-sn-glycero-3-phosphocholine = a 1-acyl-sn-glycero-2,3-cyclic phosphate + choline. The catalysed reaction is a 1-acyl-sn-glycero-3-phosphoethanolamine = a 1-acyl-sn-glycero-2,3-cyclic phosphate + ethanolamine. Dermonecrotic toxins cleave the phosphodiester linkage between the phosphate and headgroup of certain phospholipids (sphingolipid and lysolipid substrates), forming an alcohol (often choline) and a cyclic phosphate. This toxin acts on sphingomyelin (SM). It may also act on ceramide phosphoethanolamine (CPE), lysophosphatidylcholine (LPC) and lysophosphatidylethanolamine (LPE), but not on lysophosphatidylserine (LPS), and lysophosphatidylglycerol (LPG). It acts by transphosphatidylation, releasing exclusively cyclic phosphate products as second products. Induces dermonecrosis, hemolysis, increased vascular permeability, edema, inflammatory response, and platelet aggregation. The chain is Dermonecrotic toxin LspiSicTox-betaIII2 from Loxosceles spinulosa (Recluse spider).